An 851-amino-acid polypeptide reads, in one-letter code: Envelope glycoprotein gp160 (851 aa).

An N-terminal signal peptide occupies residues 1–24; it reads MEPGRNQLLVAILLTSACLIYCKQ. Residues 25 to 669 are Extracellular-facing; that stretch reads YVTVFYGIPA…LTSWIKYIQY (645 aa). N37 carries N-linked (GlcNAc...) asparagine; by host glycosylation. An intrachain disulfide couples C44 to C57. N-linked (GlcNAc...) asparagine; by host glycans are attached at residues N70, N114, N127, N134, N142, N157, N184, N195, N227, N230, N261, N267, N278, N289, N299, N355, N361, N388, N398, N401, N438, N453, and N456. 5 disulfides stabilise this stretch: C101–C203, C108–C194, C113–C154, C216–C246, and C226–C238. The V1 stretch occupies residues 113 to 153; the sequence is CNITSGTTATPSPPNITIIDENSTCIGDNNCTGLGKEEVVE. Residues 154–194 are V2; sequence CEFNMTGLEQDKKRKYNDAWYSRDVVCDKTNGTGTCYMRHC. Positions 294-327 are V3; sequence CKRPGNKTVVPITLMSGRRFHSRPVYNKKPGQAW. C294 and C328 are disulfide-bonded. 2 disulfide bridges follow: C380/C437 and C387/C410. Residues 387-410 form a V4 region; sequence CNMTWFLNWVENKTNQTHGNYAPC. The segment at 453 to 459 is V5; the sequence is NQTNITF. Residues 502-522 form a fusion peptide region; sequence GVFVLGFLGFLATAGSAMGGA. The immunosuppression stretch occupies residues 565-581; sequence LQARVTAIEKYLKDQAQ. 3 N-linked (GlcNAc...) asparagine; by host glycosylation sites follow: N601, N610, and N626. The interval 647–668 is MPER; binding to GalCer; it reads KLNSWDVFGNWFDLTSWIKYIQ. A helical transmembrane segment spans residues 670-690; the sequence is GVYIVVGIIGLRIAIYIVQLL. At 691 to 851 the chain is on the cytoplasmic side; it reads SRLRKGYRPV…IRQGAEIALL (161 aa). The YXXV motif; contains endocytosis signal signature appears at 697-700; sequence YRPV. C763 carries S-palmitoyl cysteine; by host lipidation. A Di-leucine internalization motif motif is present at residues 850-851; it reads LL.

The mature envelope protein (Env) consists of a homotrimer of non-covalently associated gp120-gp41 heterodimers. The resulting complex protrudes from the virus surface as a spike. There seems to be as few as 10 spikes on the average virion. Interacts with human CD4, CCR5 and CXCR4, to form a P4HB/PDI-CD4-CXCR4-gp120 complex. Gp120 also interacts with the C-type lectins CD209/DC-SIGN and CLEC4M/DC-SIGNR (collectively referred to as DC-SIGN(R)). Gp120 and gp41 interact with GalCer. As to quaternary structure, the mature envelope protein (Env) consists of a homotrimer of non-covalently associated gp120-gp41 heterodimers. The resulting complex protrudes from the virus surface as a spike. There seems to be as few as 10 spikes on the average virion. Specific enzymatic cleavages in vivo yield mature proteins. Envelope glycoproteins are synthesized as an inactive precursor that is heavily N-glycosylated and processed likely by host cell furin in the Golgi to yield the mature SU and TM proteins. The cleavage site between SU and TM requires the minimal sequence [KR]-X-[KR]-R. In terms of processing, palmitoylation of the transmembrane protein and of Env polyprotein (prior to its proteolytic cleavage) is essential for their association with host cell membrane lipid rafts. Palmitoylation is therefore required for envelope trafficking to classical lipid rafts, but not for viral replication.

It localises to the virion membrane. The protein resides in the host cell membrane. The protein localises to the host endosome membrane. The surface protein gp120 (SU) attaches the virus to the host lymphoid cell by binding to the primary receptor CD4. This interaction induces a structural rearrangement creating a high affinity binding site for a chemokine coreceptor like CXCR4 and/or CCR5. This peculiar 2 stage receptor-interaction strategy allows gp120 to maintain the highly conserved coreceptor-binding site in a cryptic conformation, protected from neutralizing antibodies. Since CD4 also displays a binding site for the disulfide-isomerase P4HB/PDI, a P4HB/PDI-CD4-CXCR4-gp120 complex may form. In that complex, P4HB/PDI could reach and reduce gp120 disulfide bonds, causing major conformational changes in gp120. TXN, another PDI family member could also be involved in disulfide rearrangements in Env during fusion. These changes are transmitted to the transmembrane protein gp41 and are thought to activate its fusogenic potential by unmasking its fusion peptide. Functionally, the surface protein gp120 is a ligand for CD209/DC-SIGN and CLEC4M/DC-SIGNR, which are respectively found on dendritic cells (DCs), and on endothelial cells of liver sinusoids and lymph node sinuses. These interactions allow capture of viral particles at mucosal surfaces by these cells and subsequent transmission to permissive cells. DCs are professional antigen presenting cells, critical for host immunity by inducing specific immune responses against a broad variety of pathogens. They act as sentinels in various tissues where they take up antigen, process it, and present it to T-cells following migration to lymphoid organs. HIV subverts the migration properties of dendritic cells to gain access to CD4+ T-cells in lymph nodes. Virus transmission to permissive T-cells occurs either in trans (without DCs infection, through viral capture and transmission), or in cis (following DCs productive infection, through the usual CD4-gp120 interaction), thereby inducing a robust infection. In trans infection, bound virions remain infectious over days and it is proposed that they are not degraded, but protected in non-lysosomal acidic organelles within the DCs close to the cell membrane thus contributing to the viral infectious potential during DCs' migration from the periphery to the lymphoid tissues. On arrival at lymphoid tissues, intact virions recycle back to DCs' cell surface allowing virus transmission to CD4+ T-cells. Virion capture also seems to lead to MHC-II-restricted viral antigen presentation, and probably to the activation of HIV-specific CD4+ cells. In terms of biological role, the transmembrane protein gp41 (TM) acts as a class I viral fusion protein. Under the current model, the protein has at least 3 conformational states: pre-fusion native state, pre-hairpin intermediate state, and post-fusion hairpin state. During fusion of viral and target intracellular membranes, the coiled coil regions (heptad repeats) assume a trimer-of-hairpins structure, positioning the fusion peptide in close proximity to the C-terminal region of the ectodomain. The formation of this structure appears to drive apposition and subsequent fusion of viral and target cell membranes. Complete fusion occurs in host cell endosomes and is dynamin-dependent, however some lipid transfer might occur at the plasma membrane. The virus undergoes clathrin-dependent internalization long before endosomal fusion, thus minimizing the surface exposure of conserved viral epitopes during fusion and reducing the efficacy of inhibitors targeting these epitopes. Membranes fusion leads to delivery of the nucleocapsid into the cytoplasm. Its function is as follows. The envelope glycoprotein gp160 precursor down-modulates cell surface CD4 antigen by interacting with it in the endoplasmic reticulum and blocking its transport to the cell surface. The gp120-gp41 heterodimer seems to contribute to T-cell depletion during HIV-1 infection. The envelope glycoproteins expressed on the surface of infected cells induce apoptosis through an interaction with uninfected cells expressing the receptor (CD4) and the coreceptors CXCR4 or CCR5. This type of bystander killing may be obtained by at least three distinct mechanisms. First, the interaction between the 2 cells can induce cellular fusion followed by nuclear fusion within the syncytium. Syncytia are condemned to die from apoptosis. Second, the 2 interacting cells may not fuse entirely and simply exchange plasma membrane lipids, after a sort of hemifusion process, followed by rapid death. Third, it is possible that virus-infected cells, on the point of undergoing apoptosis, fuse with CD4-expressing cells, in which case apoptosis is rapidly transmitted from one cell to the other and thus occurs in a sort of contagious fashion. Functionally, the gp120-gp41 heterodimer allows rapid transcytosis of the virus through CD4 negative cells such as simple epithelial monolayers of the intestinal, rectal and endocervical epithelial barriers. Both gp120 and gp41 specifically recognize glycosphingolipids galactosyl-ceramide (GalCer) or 3' sulfo-galactosyl-ceramide (GalS) present in the lipid rafts structures of epithelial cells. Binding to these alternative receptors allows the rapid transcytosis of the virus through the epithelial cells. This transcytotic vesicle-mediated transport of virions from the apical side to the basolateral side of the epithelial cells does not involve infection of the cells themselves. The sequence is that of Envelope glycoprotein gp160 (env) from Human immunodeficiency virus type 2 subtype A (isolate D194) (HIV-2).